Here is a 484-residue protein sequence, read N- to C-terminus: Probable protein disulfide-isomerase ER-60 (484 aa).

The signal sequence occupies residues Met1–Ala14. Thioredoxin domains follow at residues Ser15–Gly125 and Phe338–Thr467. Active-site nucleophile residues include Cys46, Cys49, Cys388, and Cys391. 2 cysteine pairs are disulfide-bonded: Cys46/Cys49 and Cys388/Cys391. Positions Lys481 to Leu484 match the Prevents secretion from ER motif.

The protein belongs to the protein disulfide isomerase family.

Its subcellular location is the endoplasmic reticulum lumen. The catalysed reaction is Catalyzes the rearrangement of -S-S- bonds in proteins.. The protein is Probable protein disulfide-isomerase ER-60 of Schistosoma mansoni (Blood fluke).